We begin with the raw amino-acid sequence, 180 residues long: NAD(P)H-quinone oxidoreductase subunit I, chloroplastic (180 aa).

4Fe-4S ferredoxin-type domains lie at 55–84 (GRIH…VDWK) and 95–124 (LNYS…MTEE). Positions 64, 67, 70, 74, 104, 107, 110, and 114 each coordinate [4Fe-4S] cluster.

This sequence belongs to the complex I 23 kDa subunit family. As to quaternary structure, NDH is composed of at least 16 different subunits, 5 of which are encoded in the nucleus. [4Fe-4S] cluster is required as a cofactor.

The protein resides in the plastid. It localises to the chloroplast thylakoid membrane. It catalyses the reaction a plastoquinone + NADH + (n+1) H(+)(in) = a plastoquinol + NAD(+) + n H(+)(out). The enzyme catalyses a plastoquinone + NADPH + (n+1) H(+)(in) = a plastoquinol + NADP(+) + n H(+)(out). Its function is as follows. NDH shuttles electrons from NAD(P)H:plastoquinone, via FMN and iron-sulfur (Fe-S) centers, to quinones in the photosynthetic chain and possibly in a chloroplast respiratory chain. The immediate electron acceptor for the enzyme in this species is believed to be plastoquinone. Couples the redox reaction to proton translocation, and thus conserves the redox energy in a proton gradient. The chain is NAD(P)H-quinone oxidoreductase subunit I, chloroplastic from Ranunculus macranthus (Large buttercup).